The sequence spans 846 residues: SLIT and NTRK-like protein 2 (846 aa).

Positions 1 to 21 (MLSGVWFLSVLTVAGILQTES) are cleaved as a signal peptide. Residues 22–622 (RKTAKDICKI…LHTEVPLSVL (601 aa)) are Extracellular-facing. 2 disulfide bridges follow: Cys-29–Cys-35 and Cys-33–Cys-46. LRR repeat units follow at residues 63 to 84 (RIYQ…EFVN), 87 to 108 (NAVT…AFSG), 111 to 132 (TLKR…TFLG), 135 to 156 (SLEY…AFSK), 159 to 180 (KLKV…VFRF), and 182 to 203 (LLTH…GVLE). A glycan (N-linked (GlcNAc...) asparagine) is linked at Asn-84. The required for interaction with PTPRD stretch occupies residues 167–215 (DNLLLSLPSNVFRFVLLTHLDLRGNRLKVMPFAGVLEHIGGIMEIQLEE). Residues 216–265 (NPWNCTCDLLPLKAWLDTITVFVGEIVCETPFRLHGKDVTQLTRQDLCPR) enclose the LRRCT 1 domain. An N-linked (GlcNAc...) asparagine glycan is attached at Asn-219. 2 disulfide bridges follow: Cys-220-Cys-243 and Cys-222-Cys-263. Positions 261-322 (DLCPRKSASG…TPRVTVSKDR (62 aa)) are disordered. 2 stretches are compositionally biased toward low complexity: residues 267–276 (SASGDSSQRS) and 285–300 (RLTP…TRAP). An LRRNT domain is found at 332–374 (QTKSPVALTCPSSCVCTSQSSDNGLNVNCQERKFTNISDLQPK). LRR repeat units lie at residues 377–398 (SPKK…DLLE), 401–422 (SLDL…AFTN), 425–446 (SLRR…MFDG), 449–470 (SLQY…TFDA), 473–494 (NLQL…IFGG), and 496–517 (ALTR…GVLD). The N-linked (GlcNAc...) asparagine glycan is linked to Asn-422. The LRRCT 2 domain occupies 530-581 (NPWDCTCDIMGLKDWTEHANSPVIINEVTCESPAKHAGEILKFLGREAICPE). A helical membrane pass occupies residues 623 to 643 (ILGLLVVFILSVCFGAGLFVF). Residues 644 to 846 (VLKRRKGVPN…LEKQTAISQL (203 aa)) are Cytoplasmic-facing. The residue at position 757 (Tyr-757) is a Phosphotyrosine.

This sequence belongs to the SLITRK family. In terms of assembly, interacts with PTPRD; this interaction is PTPRD splicing-dependent and may induce pre-synaptic differentiation. Interacts with NTRK2. As to expression, in the adult, significant expression is detected only in the brain. Broadly expressed in embryonic brain with highest expression in ventricular layer, subventricular zone, cortical plate, pyramidal layer of hippocampus, subicular neuroepithelium, thalamus, hypothalamus and spinal cord.

It is found in the membrane. Its subcellular location is the cell membrane. It localises to the cell projection. The protein resides in the dendrite. Its function is as follows. It is involved in synaptogenesis. Promotes excitatory synapse differentiation. Suppresses neurite outgrowth. Involved in the negative regulation of NTRK2. This is SLIT and NTRK-like protein 2 (Slitrk2) from Mus musculus (Mouse).